Consider the following 134-residue polypeptide: Mini-ribonuclease 3 (134 aa).

Aspartate 22 is a catalytic residue.

It belongs to the MrnC RNase family. In terms of assembly, homodimer. Mg(2+) is required as a cofactor.

The protein resides in the cytoplasm. Its function is as follows. Involved in correct processing of both the 5' and 3' ends of 23S rRNA precursor. Processes 30S rRNA precursor transcript even in absence of ribonuclease 3 (Rnc); Rnc processes 30S rRNA into smaller rRNA precursors. The polypeptide is Mini-ribonuclease 3 (Staphylococcus aureus (strain NCTC 8325 / PS 47)).